A 266-amino-acid polypeptide reads, in one-letter code: Signal peptidase I (266 aa).

Residues 1–20 (MQTDNTKSNTNKTAKQEWGS) are Cytoplasmic-facing. A helical transmembrane segment spans residues 21–41 (FAFVICIALLIRILIMEPFTV). Residues 42–266 (PTGSMKATIL…IFRNLYSTDE (225 aa)) are Periplasmic-facing. Active-site residues include Ser-45 and Lys-108.

The protein belongs to the peptidase S26 family.

Its subcellular location is the cell inner membrane. It catalyses the reaction Cleavage of hydrophobic, N-terminal signal or leader sequences from secreted and periplasmic proteins.. This Rickettsia felis (strain ATCC VR-1525 / URRWXCal2) (Rickettsia azadi) protein is Signal peptidase I (lepB).